The primary structure comprises 415 residues: Serine--tRNA ligase (415 aa).

Position 231–233 (231–233 (TAE)) interacts with L-serine. Residue 262–264 (RSE) coordinates ATP. Glu-285 contacts L-serine. An ATP-binding site is contributed by 349–352 (EISS). An L-serine-binding site is contributed by Ser-383.

It belongs to the class-II aminoacyl-tRNA synthetase family. Type-1 seryl-tRNA synthetase subfamily. As to quaternary structure, homodimer. The tRNA molecule binds across the dimer.

It is found in the cytoplasm. The catalysed reaction is tRNA(Ser) + L-serine + ATP = L-seryl-tRNA(Ser) + AMP + diphosphate + H(+). It carries out the reaction tRNA(Sec) + L-serine + ATP = L-seryl-tRNA(Sec) + AMP + diphosphate + H(+). It functions in the pathway aminoacyl-tRNA biosynthesis; selenocysteinyl-tRNA(Sec) biosynthesis; L-seryl-tRNA(Sec) from L-serine and tRNA(Sec): step 1/1. In terms of biological role, catalyzes the attachment of serine to tRNA(Ser). Is also able to aminoacylate tRNA(Sec) with serine, to form the misacylated tRNA L-seryl-tRNA(Sec), which will be further converted into selenocysteinyl-tRNA(Sec). The polypeptide is Serine--tRNA ligase (Helicobacter pylori (strain Shi470)).